We begin with the raw amino-acid sequence, 73 residues long: Dipeptidyl peptidase 3 (73 aa).

It belongs to the peptidase M49 family. Zn(2+) is required as a cofactor.

It localises to the membrane. It carries out the reaction Release of an N-terminal dipeptide from a peptide comprising four or more residues, with broad specificity. Also acts on dipeptidyl 2-naphthylamides.. Functionally, degrades neuropeptide proctolin (RYLPT) by cleavage between Tyr and Leu residues. The polypeptide is Dipeptidyl peptidase 3 (Blaberus craniifer (Death's head cockroach)).